Here is a 264-residue protein sequence, read N- to C-terminus: Proliferating cell nuclear antigen 2 (264 aa).

Residues 61 to 80 (RCDRNLSMGMNLGNMSKMLK) mediate DNA binding.

It belongs to the PCNA family. In terms of assembly, homo- and heterotrimer. Interacts with POLH, ATXR5 and ATXR6.

Its subcellular location is the nucleus. Functionally, this protein is an auxiliary protein of DNA polymerase delta and is involved in the control of eukaryotic DNA replication by increasing the polymerase's processibility during elongation of the leading strand. May be involved in UV resistance. The sequence is that of Proliferating cell nuclear antigen 2 (PCNA2) from Arabidopsis thaliana (Mouse-ear cress).